Here is a 1478-residue protein sequence, read N- to C-terminus: Bud site selection protein 3 homolog (1478 aa).

Disordered stretches follow at residues K732–G889, Q1085–N1106, and Y1146–P1168. The segment covering L749–P761 has biased composition (polar residues). Residues T763 to P777 show a composition bias toward low complexity. Positions G786 to T800 are enriched in polar residues. The span at Y1146 to A1160 shows a compositional bias: basic and acidic residues.

It belongs to the BUD3 family.

It localises to the cell tip. The protein localises to the cell septum. In terms of biological role, required for proper septum positioning and septum construction during septation. Acts as a landmark to mark sites for future septation, and as part of a scaffold that recruits components of the contractile ring to the site of septation. Not required to determine the site of lateral branch formation. The polypeptide is Bud site selection protein 3 homolog (BUD3) (Eremothecium gossypii (strain ATCC 10895 / CBS 109.51 / FGSC 9923 / NRRL Y-1056) (Yeast)).